We begin with the raw amino-acid sequence, 339 residues long: DNA-directed RNA polymerase subunit alpha (339 aa).

Residues Met1–Asp237 are alpha N-terminal domain (alpha-NTD). Residues Phe256–Glu339 are alpha C-terminal domain (alpha-CTD).

It belongs to the RNA polymerase alpha chain family. In terms of assembly, homodimer. The RNAP catalytic core consists of 2 alpha, 1 beta, 1 beta' and 1 omega subunit. When a sigma factor is associated with the core the holoenzyme is formed, which can initiate transcription.

The enzyme catalyses RNA(n) + a ribonucleoside 5'-triphosphate = RNA(n+1) + diphosphate. DNA-dependent RNA polymerase catalyzes the transcription of DNA into RNA using the four ribonucleoside triphosphates as substrates. The chain is DNA-directed RNA polymerase subunit alpha from Desulfosudis oleivorans (strain DSM 6200 / JCM 39069 / Hxd3) (Desulfococcus oleovorans).